Consider the following 163-residue polypeptide: Cuticle protein 38 (163 aa).

Tandem repeats lie at residues 7 to 10 (AAPV), 13 to 16 (AAPA), 20 to 23 (AAPA), 26 to 29 (AAPV), 56 to 59 (AAPA), 62 to 65 (AAPA), 68 to 71 (AAPA), 75 to 78 (AAPA), 81 to 84 (AAPA), 93 to 96 (AAPV), 123 to 126 (AAPA), 135 to 138 (AAPA), 141 to 144 (AAPA), and 156 to 159 (AAPV).

Functionally, component of the cuticle of migratory locust which contains more than 100 different structural proteins. The polypeptide is Cuticle protein 38 (Locusta migratoria (Migratory locust)).